We begin with the raw amino-acid sequence, 182 residues long: Endoribonuclease YbeY (182 aa).

Residues His-115, His-119, and His-125 each contribute to the Zn(2+) site.

It belongs to the endoribonuclease YbeY family. The cofactor is Zn(2+).

It is found in the cytoplasm. Single strand-specific metallo-endoribonuclease involved in late-stage 70S ribosome quality control and in maturation of the 3' terminus of the 16S rRNA. This Bifidobacterium longum (strain NCC 2705) protein is Endoribonuclease YbeY.